An 899-amino-acid polypeptide reads, in one-letter code: Calcium-transporting ATPase 1 (899 aa).

The next 4 helical transmembrane spans lie at 59-79, 80-100, 247-267, and 282-302; these read FVKD…VTLG, NIDD…VGFV, QLSL…FFQG, and VAAI…LGVL. Catalysis depends on D329, which acts as the 4-aspartylphosphate intermediate. A run of 4 helical transmembrane segments spans residues 688–708, 757–777, 827–847, and 854–874; these read FQLS…VFGF, QLLQ…IVVF, FNIA…ASPF, and EAIG…VLWV. Residue S892 is modified to Phosphoserine.

The protein belongs to the cation transport ATPase (P-type) (TC 3.A.3) family.

The protein resides in the endoplasmic reticulum membrane. The catalysed reaction is Ca(2+)(in) + ATP + H2O = Ca(2+)(out) + ADP + phosphate + H(+). In terms of biological role, transports calcium and manganese ions into the cell. Regulates cell morphogenesis through control of manganese and calcium homeostasis. The polypeptide is Calcium-transporting ATPase 1 (pmr1) (Schizosaccharomyces pombe (strain 972 / ATCC 24843) (Fission yeast)).